A 341-amino-acid polypeptide reads, in one-letter code: L-threonine 3-dehydrogenase (341 aa).

A Zn(2+)-binding site is contributed by Cys-38. Catalysis depends on charge relay system residues Thr-40 and His-43. His-63, Glu-64, Cys-93, Cys-96, Cys-99, and Cys-107 together coordinate Zn(2+). Residues Ile-175, Asp-195, Arg-200, 262–264 (LGI), and 286–287 (IY) each bind NAD(+).

The protein belongs to the zinc-containing alcohol dehydrogenase family. In terms of assembly, homotetramer. Zn(2+) is required as a cofactor.

It is found in the cytoplasm. The catalysed reaction is L-threonine + NAD(+) = (2S)-2-amino-3-oxobutanoate + NADH + H(+). It participates in amino-acid degradation; L-threonine degradation via oxydo-reductase pathway; glycine from L-threonine: step 1/2. Its function is as follows. Catalyzes the NAD(+)-dependent oxidation of L-threonine to 2-amino-3-ketobutyrate. The sequence is that of L-threonine 3-dehydrogenase from Salmonella arizonae (strain ATCC BAA-731 / CDC346-86 / RSK2980).